Reading from the N-terminus, the 343-residue chain is Calcium/calmodulin-dependent protein kinase type 1B (343 aa).

The 256-residue stretch at Tyr15–Ile270 folds into the Protein kinase domain. ATP is bound by residues Leu21–Val29 and Lys44. Asp136 (proton acceptor) is an active-site residue. Residues Lys290–Arg311 are calmodulin-binding. The segment at Gly314–Trp343 is disordered. Ser338 is modified (phosphoserine).

It belongs to the protein kinase superfamily. CAMK Ser/Thr protein kinase family. CaMK subfamily. In terms of processing, isoform 1 and isoform 2 are phosphorylated by CAMKK1. In terms of tissue distribution, isoform 1 is expressed in liver, heart, lung, kidney, spleen and testis. Isoform 2 is predominantly expressed in cerebrum and cerebellum.

The protein resides in the cytoplasm. It localises to the nucleus. The catalysed reaction is L-seryl-[protein] + ATP = O-phospho-L-seryl-[protein] + ADP + H(+). The enzyme catalyses L-threonyl-[protein] + ATP = O-phospho-L-threonyl-[protein] + ADP + H(+). Activated by Ca(2+)/calmodulin. Must be phosphorylated to be maximally active. Activated by CAMKK1. Functionally, calcium/calmodulin-dependent protein kinase belonging to a proposed calcium-triggered signaling cascade. In vitro, isoform 1 and isoform 2 phosphorylate CREB1, SYN1/synapsin I. Phosphorylates and activates CAMK1. The sequence is that of Calcium/calmodulin-dependent protein kinase type 1B (Pnck) from Rattus norvegicus (Rat).